The primary structure comprises 172 residues: Adenine phosphoribosyltransferase (172 aa).

It belongs to the purine/pyrimidine phosphoribosyltransferase family. As to quaternary structure, homodimer.

The protein localises to the cytoplasm. It carries out the reaction AMP + diphosphate = 5-phospho-alpha-D-ribose 1-diphosphate + adenine. Its pathway is purine metabolism; AMP biosynthesis via salvage pathway; AMP from adenine: step 1/1. In terms of biological role, catalyzes a salvage reaction resulting in the formation of AMP, that is energically less costly than de novo synthesis. The sequence is that of Adenine phosphoribosyltransferase from Rippkaea orientalis (strain PCC 8801 / RF-1) (Cyanothece sp. (strain PCC 8801)).